We begin with the raw amino-acid sequence, 421 residues long: Histidine--tRNA ligase (421 aa).

Belongs to the class-II aminoacyl-tRNA synthetase family. In terms of assembly, homodimer.

It localises to the cytoplasm. It catalyses the reaction tRNA(His) + L-histidine + ATP = L-histidyl-tRNA(His) + AMP + diphosphate + H(+). The chain is Histidine--tRNA ligase from Alkaliphilus oremlandii (strain OhILAs) (Clostridium oremlandii (strain OhILAs)).